Reading from the N-terminus, the 55-residue chain is Large ribosomal subunit protein bL32c (55 aa).

It belongs to the bacterial ribosomal protein bL32 family.

It localises to the plastid. It is found in the chloroplast. The chain is Large ribosomal subunit protein bL32c from Nicotiana sylvestris (Wood tobacco).